The primary structure comprises 341 residues: Ketol-acid reductoisomerase (NADP(+)) (341 aa).

The region spanning 2 to 182 (AKIYYNDDAD…GGTRAGVIET (181 aa)) is the KARI N-terminal Rossmann domain. NADP(+) contacts are provided by residues 25-28 (YGSQ), serine 51, serine 53, and 83-86 (DQVQ). The active site involves histidine 108. Residue glycine 134 coordinates NADP(+). The KARI C-terminal knotted domain occupies 183–328 (TFTEETESDL…RKLRSLFAWE (146 aa)). The Mg(2+) site is built by aspartate 191, glutamate 195, glutamate 227, and glutamate 231. Serine 252 provides a ligand contact to substrate.

The protein belongs to the ketol-acid reductoisomerase family. Mg(2+) is required as a cofactor.

The enzyme catalyses (2R)-2,3-dihydroxy-3-methylbutanoate + NADP(+) = (2S)-2-acetolactate + NADPH + H(+). It catalyses the reaction (2R,3R)-2,3-dihydroxy-3-methylpentanoate + NADP(+) = (S)-2-ethyl-2-hydroxy-3-oxobutanoate + NADPH + H(+). It functions in the pathway amino-acid biosynthesis; L-isoleucine biosynthesis; L-isoleucine from 2-oxobutanoate: step 2/4. Its pathway is amino-acid biosynthesis; L-valine biosynthesis; L-valine from pyruvate: step 2/4. In terms of biological role, involved in the biosynthesis of branched-chain amino acids (BCAA). Catalyzes an alkyl-migration followed by a ketol-acid reduction of (S)-2-acetolactate (S2AL) to yield (R)-2,3-dihydroxy-isovalerate. In the isomerase reaction, S2AL is rearranged via a Mg-dependent methyl migration to produce 3-hydroxy-3-methyl-2-ketobutyrate (HMKB). In the reductase reaction, this 2-ketoacid undergoes a metal-dependent reduction by NADPH to yield (R)-2,3-dihydroxy-isovalerate. This is Ketol-acid reductoisomerase (NADP(+)) from Kocuria rhizophila (strain ATCC 9341 / DSM 348 / NBRC 103217 / DC2201).